The chain runs to 659 residues: Alpha-galactosidase D (659 aa).

The first 20 residues, 1–20 (MRALVPMVVAATALASPAPA), serve as a signal peptide directing secretion. N-linked (GlcNAc...) asparagine glycosylation is found at Asn-48, Asn-86, and Asn-130. A disulfide bond links Cys-125 and Cys-158. Asp-156 (nucleophile) is an active-site residue. Asn-183 is a glycosylation site (N-linked (GlcNAc...) asparagine). 201–205 (EWGID) provides a ligand contact to substrate. Asp-223 acts as the Proton donor in catalysis. Asn-438, Asn-450, Asn-484, Asn-551, and Asn-583 each carry an N-linked (GlcNAc...) asparagine glycan.

Belongs to the glycosyl hydrolase 27 family.

It localises to the secreted. The catalysed reaction is Hydrolysis of terminal, non-reducing alpha-D-galactose residues in alpha-D-galactosides, including galactose oligosaccharides, galactomannans and galactolipids.. Its function is as follows. Hydrolyzes a variety of simple alpha-D-galactoside as well as more complex molecules such as oligosaccharides and polysaccharides. Active on paranitrophenyl-alpha-galactoside but not on raffinose, locust bean gum and gum guar. The protein is Alpha-galactosidase D (aglD) of Emericella nidulans (strain FGSC A4 / ATCC 38163 / CBS 112.46 / NRRL 194 / M139) (Aspergillus nidulans).